Here is a 913-residue protein sequence, read N- to C-terminus: Chitin synthase 1 (913 aa).

The disordered stretch occupies residues 1-135 (MAYRGGGPND…QQPGAQTGGL (135 aa)). A glycan (N-linked (GlcNAc...) asparagine) is linked at Asn25. A compositionally biased stretch (basic and acidic residues) spans 41–56 (RDPHARGTSPYEHHLG). A glycan (N-linked (GlcNAc...) asparagine) is linked at Asn539. A run of 7 helical transmembrane segments spans residues 566-586 (FFFH…WFSL), 625-645 (IINS…FVLA), 658-678 (IASF…SGYL), 712-732 (VILV…FMYL), 740-760 (SFPY…VYAF), 840-860 (TGLV…ITTD), and 881-901 (FLLY…LWFL).

The protein belongs to the chitin synthase family. Class III subfamily.

The protein localises to the cell membrane. The enzyme catalyses [(1-&gt;4)-N-acetyl-beta-D-glucosaminyl](n) + UDP-N-acetyl-alpha-D-glucosamine = [(1-&gt;4)-N-acetyl-beta-D-glucosaminyl](n+1) + UDP + H(+). In terms of biological role, polymerizes chitin, a structural polymer of the cell wall and septum, by transferring the sugar moiety of UDP-GlcNAc to the non-reducing end of the growing chitin polymer. Plays a role in cell wall integrity and is involved in tolerance to hyperosmotic conditions. Required to successfully penetrate the host plants and thus plays a key role in pathogenicity. This chain is Chitin synthase 1, found in Verticillium dahliae (strain VdLs.17 / ATCC MYA-4575 / FGSC 10137) (Verticillium wilt).